The chain runs to 35 residues: Augerpeptide hheTx4 (35 aa).

Contains 4 disulfide bonds. As to expression, expressed by the venom duct.

It localises to the secreted. The sequence is that of Augerpeptide hheTx4 from Hastula hectica (Sea snail).